Reading from the N-terminus, the 461-residue chain is Cysteine--tRNA ligase (461 aa).

Position 28 (Cys28) interacts with Zn(2+). The 'HIGH' region signature appears at 30 to 40 (ITVYDLCHIGH). Residues Cys209, His234, and Glu238 each contribute to the Zn(2+) site. The short motif at 266–270 (KMSKS) is the 'KMSKS' region element. Lys269 serves as a coordination point for ATP.

It belongs to the class-I aminoacyl-tRNA synthetase family. In terms of assembly, monomer. It depends on Zn(2+) as a cofactor.

Its subcellular location is the cytoplasm. It catalyses the reaction tRNA(Cys) + L-cysteine + ATP = L-cysteinyl-tRNA(Cys) + AMP + diphosphate. The protein is Cysteine--tRNA ligase of Klebsiella pneumoniae (strain 342).